Consider the following 375-residue polypeptide: S-adenosylmethionine:tRNA ribosyltransferase-isomerase (375 aa).

This sequence belongs to the QueA family. As to quaternary structure, monomer.

The protein resides in the cytoplasm. It catalyses the reaction 7-aminomethyl-7-carbaguanosine(34) in tRNA + S-adenosyl-L-methionine = epoxyqueuosine(34) in tRNA + adenine + L-methionine + 2 H(+). Its pathway is tRNA modification; tRNA-queuosine biosynthesis. Its function is as follows. Transfers and isomerizes the ribose moiety from AdoMet to the 7-aminomethyl group of 7-deazaguanine (preQ1-tRNA) to give epoxyqueuosine (oQ-tRNA). The sequence is that of S-adenosylmethionine:tRNA ribosyltransferase-isomerase from Rickettsia typhi (strain ATCC VR-144 / Wilmington).